We begin with the raw amino-acid sequence, 84 residues long: Large ribosomal subunit protein bL27 (84 aa).

It belongs to the bacterial ribosomal protein bL27 family.

The chain is Large ribosomal subunit protein bL27 from Kocuria rhizophila (strain ATCC 9341 / DSM 348 / NBRC 103217 / DC2201).